The sequence spans 622 residues: Low affinity potassium transport system protein Kup (622 aa).

The next 12 membrane-spanning stretches (helical) occupy residues 9 to 29 (LPAITLAAIGVVYGDIGTSPL), 49 to 69 (VFGFLSLIFWLLIFVVSIKYL), 103 to 123 (VIMGLIGGSFFYGEVVITPAI), 137 to 157 (PQLDTWIVPLSIIVLTLLFMI), 165 to 185 (VGKLFAPIMLTWFLILAGLGL), 213 to 233 (VSFIALGAVVLSITGVEALYA), 247 to 267 (WFTVVLPSLTLNYFGQGALLL), 276 to 296 (PFFLLAPDWALIPLLIIAALA), 337 to 357 (IYIPFVNWMLYVAVVIVIVSF), 363 to 383 (LAAAYGIAVTGTMVLTSILST), 396 to 416 (FVALILIAFLCVDIPLFTANL), and 419 to 439 (LLSGGWLPLSLGTVMFIVMTT).

This sequence belongs to the HAK/KUP transporter (TC 2.A.72) family.

It is found in the cell inner membrane. It carries out the reaction K(+)(in) + H(+)(in) = K(+)(out) + H(+)(out). Its function is as follows. Responsible for the low-affinity transport of potassium into the cell. Likely operates as a K(+):H(+) symporter. This Escherichia coli (strain K12 / MC4100 / BW2952) protein is Low affinity potassium transport system protein Kup.